Here is a 345-residue protein sequence, read N- to C-terminus: Beta-2-glycoprotein 1 (345 aa).

A signal peptide spans 1–19; sequence MVSPVLALFSAFLCHVAIA. 4 Sushi domains span residues 21-81, 82-139, 140-202, and 203-262; these read RICP…RCVP, RVCP…ACAR, ITCP…ECLE, and VKCP…TCRE. Cystine bridges form between Cys23-Cys66, Cys51-Cys79, Cys84-Cys124, Cys110-Cys137, Cys142-Cys188, Cys174-Cys200, Cys205-Cys248, Cys234-Cys260, Cys264-Cys315, Cys300-Cys325, and Cys307-Cys345. Thr33 carries an O-linked (GalNAc...) threonine glycan. N-linked (GlcNAc...) asparagine glycans are attached at residues Asn105, Asn117, Asn162, Asn183, and Asn193. Residues 263–345 are sushi-like; that stretch reads SCKLPVKKAT…KTDASELTPC (83 aa).

Expressed by the liver and secreted in plasma.

It is found in the secreted. Binds to various kinds of negatively charged substances such as heparin, phospholipids, and dextran sulfate. May prevent activation of the intrinsic blood coagulation cascade by binding to phospholipids on the surface of damaged cells. This chain is Beta-2-glycoprotein 1 (Apoh), found in Mus musculus (Mouse).